The following is a 475-amino-acid chain: Histidine--tRNA ligase (475 aa).

This sequence belongs to the class-II aminoacyl-tRNA synthetase family. As to quaternary structure, homodimer.

It localises to the cytoplasm. It catalyses the reaction tRNA(His) + L-histidine + ATP = L-histidyl-tRNA(His) + AMP + diphosphate + H(+). This is Histidine--tRNA ligase from Flavobacterium johnsoniae (strain ATCC 17061 / DSM 2064 / JCM 8514 / BCRC 14874 / CCUG 350202 / NBRC 14942 / NCIMB 11054 / UW101) (Cytophaga johnsonae).